The following is a 254-amino-acid chain: Ciliary microtubule associated protein 1A (254 aa).

STPGR repeat units follow at residues 180–205 (PGPA…MAAR) and 216–241 (PGPG…FGIK). The tract at residues 207 to 226 (EPPGDKTLKPGPGAHSPEKV) is disordered.

Belongs to the CIMAP family. Microtubule inner protein component of sperm flagellar doublet microtubules. As to expression, testis-specific.

It is found in the cytoplasm. The protein localises to the cytoskeleton. Its subcellular location is the flagellum axoneme. Functionally, outer dense fibers are filamentous structures located on the outside of the axoneme in the midpiece and principal piece of the mammalian sperm tail. May help to maintain the passive elastic structures and elastic recoil of the sperm tail. This is Ciliary microtubule associated protein 1A from Homo sapiens (Human).